We begin with the raw amino-acid sequence, 408 residues long: LIN1-like protein (408 aa).

A disordered region spans residues 1 to 161 (MKRTLRNPGN…SVPSSPKRMS (161 aa)). The span at 41–52 (YYESESEEDEDQ) shows a compositional bias: acidic residues. Composition is skewed to basic and acidic residues over residues 53–62 (ILNKEKKEGQ), 73–109 (DEKRTLPNDEAQKRRDFIENGDAERLAHKGLRNKEVL), and 119–129 (NGKYSKLRYED). The region spanning 344–402 (SSQYNFKWEFDDKTYGPYTASQIQAWSNEGYFTDAKHAAFIQLANMDEWMYPNNICFCD) is the GYF domain.

This sequence belongs to the LIN1 family.

The protein is LIN1-like protein of Schizosaccharomyces pombe (strain 972 / ATCC 24843) (Fission yeast).